The sequence spans 138 residues: Integration host factor subunit beta (138 aa).

Over residues 81 to 98 the composition is skewed to basic and acidic residues; that stretch reads KAGKELRERVDRSLERQG. A disordered region spans residues 81 to 138; it reads KAGKELRERVDRSLERQGDSSSEGEPVSLTAVKAARQAGGHHAAGFPAEATPTLVMSR.

Belongs to the bacterial histone-like protein family. Heterodimer of an alpha and a beta chain.

This protein is one of the two subunits of integration host factor, a specific DNA-binding protein that functions in genetic recombination as well as in transcriptional and translational control. The protein is Integration host factor subunit beta of Ralstonia nicotianae (strain ATCC BAA-1114 / GMI1000) (Ralstonia solanacearum).